The chain runs to 89 residues: Large ribosomal subunit protein bL27 (89 aa).

The interval 1-26 (MAHKKAGGSSRNGRDSAGQRRGVKRF) is disordered.

Belongs to the bacterial ribosomal protein bL27 family.

The sequence is that of Large ribosomal subunit protein bL27 from Nitratidesulfovibrio vulgaris (strain DSM 19637 / Miyazaki F) (Desulfovibrio vulgaris).